Consider the following 162-residue polypeptide: MNPVRKKRLIIVLAILVGVGAAVGLALSALQQNINLFYTPTQIANGEAPTDTRIRAGGLVEKGSLQRSADSLNVRFVVTDGAKEVTIAYHGILPDLFREGQGIVALGKLGGDGVLVADEVLAKHDENYMPPEVTKALKDSGQLKHYENGKAAGETSYNQEGK.

Over 1–8 (MNPVRKKR) the chain is Cytoplasmic. The chain crosses the membrane as a helical; Signal-anchor for type II membrane protein span at residues 9-29 (LIIVLAILVGVGAAVGLALSA). Residues 30–162 (LQQNINLFYT…GETSYNQEGK (133 aa)) lie on the Periplasmic side of the membrane. Histidine 124 and tyrosine 128 together coordinate heme. The segment covering 139–148 (DSGQLKHYEN) has biased composition (basic and acidic residues). The interval 139–162 (DSGQLKHYENGKAAGETSYNQEGK) is disordered.

This sequence belongs to the CcmE/CycJ family.

It is found in the cell inner membrane. In terms of biological role, heme chaperone required for the biogenesis of c-type cytochromes. Transiently binds heme delivered by CcmC and transfers the heme to apo-cytochromes in a process facilitated by CcmF and CcmH. The sequence is that of Cytochrome c-type biogenesis protein CcmE from Pseudomonas paraeruginosa (strain DSM 24068 / PA7) (Pseudomonas aeruginosa (strain PA7)).